The following is a 289-amino-acid chain: D-alanine aminotransferase (289 aa).

Position 31 (Tyr31) interacts with substrate. Arg50 provides a ligand contact to pyridoxal 5'-phosphate. The substrate site is built by Arg99 and His101. Position 147 is an N6-(pyridoxal phosphate)lysine (Lys147). Residue Glu179 coordinates pyridoxal 5'-phosphate.

The protein belongs to the class-IV pyridoxal-phosphate-dependent aminotransferase family. As to quaternary structure, homodimer. Pyridoxal 5'-phosphate serves as cofactor.

The enzyme catalyses D-alanine + 2-oxoglutarate = D-glutamate + pyruvate. Its function is as follows. Acts on the D-isomers of alanine, leucine, aspartate, glutamate, aminobutyrate, norvaline and asparagine. The enzyme transfers an amino group from a substrate D-amino acid to the pyridoxal phosphate cofactor to form pyridoxamine and an alpha-keto acid in the first half-reaction. The second half-reaction is the reverse of the first, transferring the amino group from the pyridoxamine to a second alpha-keto acid to form the product D-amino acid via a ping-pong mechanism. This is an important process in the formation of D-alanine and D-glutamate, which are essential bacterial cell wall components. In Listeria monocytogenes serovar 1/2a (strain ATCC BAA-679 / EGD-e), this protein is D-alanine aminotransferase (dat).